A 242-amino-acid polypeptide reads, in one-letter code: Carboxy-S-adenosyl-L-methionine synthase (242 aa).

S-adenosyl-L-methionine-binding positions include tyrosine 39, glycine 64–serine 66, aspartate 89–asparagine 90, aspartate 117–isoleucine 118, asparagine 132, and arginine 199.

The protein belongs to the class I-like SAM-binding methyltransferase superfamily. Cx-SAM synthase family. Homodimer.

The enzyme catalyses prephenate + S-adenosyl-L-methionine = carboxy-S-adenosyl-L-methionine + 3-phenylpyruvate + H2O. Functionally, catalyzes the conversion of S-adenosyl-L-methionine (SAM) to carboxy-S-adenosyl-L-methionine (Cx-SAM). This is Carboxy-S-adenosyl-L-methionine synthase from Vibrio atlanticus (strain LGP32) (Vibrio splendidus (strain Mel32)).